The following is a 430-amino-acid chain: Serine--tRNA ligase (430 aa).

237–239 (TAE) is a binding site for L-serine. ATP is bound at residue 268–270 (RSE). Glu291 contributes to the L-serine binding site. 355-358 (EISS) contacts ATP. Ser391 lines the L-serine pocket.

This sequence belongs to the class-II aminoacyl-tRNA synthetase family. Type-1 seryl-tRNA synthetase subfamily. As to quaternary structure, homodimer. The tRNA molecule binds across the dimer.

The protein resides in the cytoplasm. It carries out the reaction tRNA(Ser) + L-serine + ATP = L-seryl-tRNA(Ser) + AMP + diphosphate + H(+). The enzyme catalyses tRNA(Sec) + L-serine + ATP = L-seryl-tRNA(Sec) + AMP + diphosphate + H(+). Its pathway is aminoacyl-tRNA biosynthesis; selenocysteinyl-tRNA(Sec) biosynthesis; L-seryl-tRNA(Sec) from L-serine and tRNA(Sec): step 1/1. Catalyzes the attachment of serine to tRNA(Ser). Is also able to aminoacylate tRNA(Sec) with serine, to form the misacylated tRNA L-seryl-tRNA(Sec), which will be further converted into selenocysteinyl-tRNA(Sec). This is Serine--tRNA ligase from Salmonella heidelberg (strain SL476).